Reading from the N-terminus, the 278-residue chain is DNA-directed RNA polymerase subunit alpha (278 aa).

The protein belongs to the RNA polymerase alpha chain family. In plastids the minimal PEP RNA polymerase catalytic core is composed of four subunits: alpha, beta, beta', and beta''. When a (nuclear-encoded) sigma factor is associated with the core the holoenzyme is formed, which can initiate transcription.

It localises to the plastid. Its subcellular location is the chloroplast. The enzyme catalyses RNA(n) + a ribonucleoside 5'-triphosphate = RNA(n+1) + diphosphate. Functionally, DNA-dependent RNA polymerase catalyzes the transcription of DNA into RNA using the four ribonucleoside triphosphates as substrates. The polypeptide is DNA-directed RNA polymerase subunit alpha (rpoA) (Chlorella vulgaris (Green alga)).